The following is a 409-amino-acid chain: MDSNFIFGIGAFTAIVLVLAVVILIAKSKLVDSGDITISINDDPSKAITLPAGGKLLGALASKGIFVSSACGGGGSCGQCRVKVKSGGGEILPTELSHISKKEAKEGWRLSCQVNVKSSMDVELPEEVFGVKKWECTVISNDNKATFIKELKLAIPEGEEVPFRAGGYIQIEAEPHTVAYKDFDIPEEYHEDWDKFNLWRYVSKVDEHIIRAYSMASYPEEKGIIMLNVRIATPPPRNPNVPPGQMSSYIWSLKPGDKVTISGPFGEFFAKDTDAEMVFIGGGAGMAPMRSHIFDQLKRLHSKRKISFWYGARSKREMFYVEDFDQLQAENPNFTWHVALSDPLPEDNWDGYTGFIHNVLYENYLKNHEAPEDCEYYMCGPPVMNAAVIKMLEDLGVEHENILLDDFGG.

A helical membrane pass occupies residues 5-25 (FIFGIGAFTAIVLVLAVVILI). In terms of domain architecture, 2Fe-2S ferredoxin-type spans 34–128 (GDITISINDD…SMDVELPEEV (95 aa)). [2Fe-2S] cluster is bound by residues C71, C77, C80, and C112. In terms of domain architecture, FAD-binding FR-type spans 131-271 (VKKWECTVIS…SGPFGEFFAK (141 aa)).

Belongs to the NqrF family. As to quaternary structure, composed of six subunits; NqrA, NqrB, NqrC, NqrD, NqrE and NqrF. It depends on [2Fe-2S] cluster as a cofactor. FAD serves as cofactor.

The protein resides in the cell inner membrane. It carries out the reaction a ubiquinone + n Na(+)(in) + NADH + H(+) = a ubiquinol + n Na(+)(out) + NAD(+). Functionally, NQR complex catalyzes the reduction of ubiquinone-1 to ubiquinol by two successive reactions, coupled with the transport of Na(+) ions from the cytoplasm to the periplasm. The first step is catalyzed by NqrF, which accepts electrons from NADH and reduces ubiquinone-1 to ubisemiquinone by a one-electron transfer pathway. This Actinobacillus succinogenes (strain ATCC 55618 / DSM 22257 / CCUG 43843 / 130Z) protein is Na(+)-translocating NADH-quinone reductase subunit F.